Reading from the N-terminus, the 361-residue chain is 3-dehydroquinate synthase (361 aa).

Residues 73 to 78 (DAEAGK), 107 to 111 (GAATD), 131 to 132 (TT), K144, K153, and 171 to 174 (TLET) contribute to the NAD(+) site. Zn(2+)-binding residues include E186, H249, and H265.

The protein belongs to the sugar phosphate cyclases superfamily. Dehydroquinate synthase family. The cofactor is NAD(+). It depends on Co(2+) as a cofactor. Zn(2+) is required as a cofactor.

The protein localises to the cytoplasm. It catalyses the reaction 7-phospho-2-dehydro-3-deoxy-D-arabino-heptonate = 3-dehydroquinate + phosphate. It functions in the pathway metabolic intermediate biosynthesis; chorismate biosynthesis; chorismate from D-erythrose 4-phosphate and phosphoenolpyruvate: step 2/7. Catalyzes the conversion of 3-deoxy-D-arabino-heptulosonate 7-phosphate (DAHP) to dehydroquinate (DHQ). In Mycobacterium leprae (strain TN), this protein is 3-dehydroquinate synthase.